Reading from the N-terminus, the 307-residue chain is Ribosomal protein uL3 glutamine methyltransferase (307 aa).

The protein belongs to the protein N5-glutamine methyltransferase family. PrmB subfamily.

The catalysed reaction is L-glutaminyl-[ribosomal protein uL3] + S-adenosyl-L-methionine = N(5)-methyl-L-glutaminyl-[ribosomal protein uL3] + S-adenosyl-L-homocysteine + H(+). In terms of biological role, methylates large ribosomal subunit protein uL3 on a specific glutamine residue. The polypeptide is Ribosomal protein uL3 glutamine methyltransferase (Burkholderia pseudomallei (strain K96243)).